Reading from the N-terminus, the 347-residue chain is D-alanine--D-alanine ligase (347 aa).

In terms of domain architecture, ATP-grasp spans K134 to K332. L161–Y216 is a binding site for ATP. The Mg(2+) site is built by D288, E300, and N302.

It belongs to the D-alanine--D-alanine ligase family. It depends on Mg(2+) as a cofactor. The cofactor is Mn(2+).

Its subcellular location is the cytoplasm. It carries out the reaction 2 D-alanine + ATP = D-alanyl-D-alanine + ADP + phosphate + H(+). It participates in cell wall biogenesis; peptidoglycan biosynthesis. Cell wall formation. The chain is D-alanine--D-alanine ligase from Helicobacter pylori (strain HPAG1).